Here is a 148-residue protein sequence, read N- to C-terminus: 2S seed storage protein 1 (148 aa).

The N-terminal stretch at 1–19 is a signal peptide; the sequence is MARFTIVLAVLFAAALVSA. The propeptide occupies 20-38; it reads SAHKTVVTTSVAEEGEEEN. An involved in IgE-binding region spans residues 24 to 94; the sequence is TVVTTSVAEE…ECCNELRDVK (71 aa). Disulfide bonds link Cys-42-Cys-97, Cys-54-Cys-86, Cys-87-Cys-133, and Cys-99-Cys-141. Immunodominant epitope; binds to IgE of 14 patients out of 15 tested regions lie at residues 46 to 55, 48 to 57, and 76 to 86; these read SRQCQMRHCM, QCQMRHCMQW, and NQGQFEHFREC. A propeptide spanning residues 69–76 is cleaved from the precursor; that stretch reads FLRSAEAN. Residues 147–148 constitute a propeptide that is removed on maturation; that stretch reads FA.

It belongs to the 2S seed storage albumins family. The mature protein consists of a small and a large chain linked by disulfide bonds. Expressed in seeds (at protein level).

Functionally, seed storage protein. The polypeptide is 2S seed storage protein 1 (Sesamum indicum (Oriental sesame)).